The following is a 428-amino-acid chain: D-inositol 3-phosphate glycosyltransferase (428 aa).

H17 is a binding site for 1D-myo-inositol 3-phosphate. UDP-N-acetyl-alpha-D-glucosamine-binding positions include 23–24 (QP) and G31. 1D-myo-inositol 3-phosphate is bound by residues 28-33 (DAGGMN), R86, Y119, T143, and R163. 2 residues coordinate UDP-N-acetyl-alpha-D-glucosamine: R237 and K242. 3 residues coordinate Mg(2+): Y312, R313, and A315. The UDP-N-acetyl-alpha-D-glucosamine site is built by E325 and E333. Residue T339 coordinates Mg(2+).

The protein belongs to the glycosyltransferase group 1 family. MshA subfamily. In terms of assembly, homodimer.

It catalyses the reaction 1D-myo-inositol 3-phosphate + UDP-N-acetyl-alpha-D-glucosamine = 1D-myo-inositol 2-acetamido-2-deoxy-alpha-D-glucopyranoside 3-phosphate + UDP + H(+). Its function is as follows. Catalyzes the transfer of a N-acetyl-glucosamine moiety to 1D-myo-inositol 3-phosphate to produce 1D-myo-inositol 2-acetamido-2-deoxy-glucopyranoside 3-phosphate in the mycothiol biosynthesis pathway. The polypeptide is D-inositol 3-phosphate glycosyltransferase (Thermobispora bispora (strain ATCC 19993 / DSM 43833 / CBS 139.67 / JCM 10125 / KCTC 9307 / NBRC 14880 / R51)).